A 421-amino-acid polypeptide reads, in one-letter code: Telomeric repeat-binding factor 1 (421 aa).

Positions 1–30 are disordered; it reads MAETVSSAARDAPSREGWTDSDSPEQEEVG. Ala2 carries the post-translational modification N-acetylalanine. The tract at residues 49–255 is TRFH mediates dimerization; the sequence is ENAELVAEVE…AATKVVENEK (207 aa). A Glycyl lysine isopeptide (Lys-Gly) (interchain with G-Cter in SUMO2) cross-link involves residue Lys200. Ser206 carries the post-translational modification Phosphoserine; by ATM. The tract at residues 252–365 is interaction with RLIM; the sequence is ENEKARTQAS…PDTDDKSGRR (114 aa). Positions 253–266 are enriched in basic and acidic residues; that stretch reads NEKARTQASKDRPD. The interval 253–366 is disordered; the sequence is NEKARTQASK…DTDDKSGRRK (114 aa). Polar residues predominate over residues 284–310; sequence VNGQQSTETEPLVDTVSSIRSHKNALS. The Nuclear localization signal signature appears at 313–367; sequence KHRRAPSDFSRNEARTGTLQCETTMERNRRTSGRNRLCVSENQPDTDDKSGRRKR. Positions 362–419 constitute an HTH myb-type domain; the sequence is SGRRKRQTWLWEEDRILKCGVKKYGEGNWAKILSHYKFNNRTSVMLKDRWRTMKRLKL. The H-T-H motif DNA-binding region spans 390-415; sequence WAKILSHYKFNNRTSVMLKDRWRTMK.

Homodimer; can contain both isoforms. Found in a complex with POT1; TINF2 and TNKS1. Interacts with ATM, TINF2, TNKS1, TNKS2, PINX1, NEK2 and MAPRE1. Component of the shelterin complex (telosome) composed of TERF1, TERF2, TINF2, TERF2IP ACD and POT1. Interacts with RLIM (via N-terminus). Interacts with FBXO4. Interaction with TINF2 protects against interaction with FBXO4 and subsequent polyubiquitination and proteasomal degradation. Interacts with GNL3L; this interaction promotes homodimerization. Interacts with TIN2. Interactions with GNL3L and TIN2 are mutually exclusive. Interacts with RTEL1. Interacts with CCDC79/TERB1. In terms of processing, phosphorylated preferentially on Ser-219 in an ATM-dependent manner in response to ionizing DNA damage. Post-translationally, ADP-ribosylation by TNKS1 or TNKS2 diminishes its ability to bind to telomeric DNA. Ubiquitinated by RLIM/RNF12, leading to its degradation by the proteasome. Ubiquitinated by a SCF (SKP1-CUL1-F-box protein) ubiquitin-protein ligase complex, leading to its degradation by the proteasome.

The protein resides in the nucleus. The protein localises to the chromosome. It localises to the telomere. Its subcellular location is the cytoplasm. It is found in the cytoskeleton. The protein resides in the spindle. In terms of biological role, binds the telomeric double-stranded 5'-TTAGGG-3' repeat and negatively regulates telomere length. Involved in the regulation of the mitotic spindle. Component of the shelterin complex (telosome) that is involved in the regulation of telomere length and protection. Shelterin associates with arrays of double-stranded 5'-TTAGGG-3' repeats added by telomerase and protects chromosome ends; without its protective activity, telomeres are no longer hidden from the DNA damage surveillance and chromosome ends are inappropriately processed by DNA repair pathways. The chain is Telomeric repeat-binding factor 1 (Terf1) from Mus musculus (Mouse).